The chain runs to 459 residues: Taurine--pyruvate aminotransferase (459 aa).

At Lys-287 the chain carries N6-(pyridoxal phosphate)lysine.

It belongs to the class-III pyridoxal-phosphate-dependent aminotransferase family. The cofactor is pyridoxal 5'-phosphate.

Its subcellular location is the cytoplasm. It catalyses the reaction taurine + pyruvate = sulfoacetaldehyde + L-alanine. The protein operates within organosulfur degradation; taurine degradation via aerobic pathway; acetyl phosphate and sulfite from taurine: step 1/2. In terms of biological role, catalyzes the degradation of taurine into alanine and sulfoacetaldehyde. This is Taurine--pyruvate aminotransferase from Rhodobacter capsulatus (strain ATCC BAA-309 / NBRC 16581 / SB1003).